We begin with the raw amino-acid sequence, 246 residues long: Uridylate kinase (246 aa).

ATP is bound at residue 18-21 (KVSG). Gly60 lines the UMP pocket. ATP contacts are provided by Gly61 and Arg65. UMP is bound by residues Asp80 and 141-148 (TGNPFFTT). Residues Thr168, Gln169, Tyr174, and Asp177 each coordinate ATP.

This sequence belongs to the UMP kinase family. As to quaternary structure, homohexamer.

It localises to the cytoplasm. It carries out the reaction UMP + ATP = UDP + ADP. The protein operates within pyrimidine metabolism; CTP biosynthesis via de novo pathway; UDP from UMP (UMPK route): step 1/1. Inhibited by UTP. Its function is as follows. Catalyzes the reversible phosphorylation of UMP to UDP. In Granulibacter bethesdensis (strain ATCC BAA-1260 / CGDNIH1), this protein is Uridylate kinase.